Reading from the N-terminus, the 106-residue chain is Tapetal oleosin GRP-19 (106 aa).

The next 3 helical transmembrane spans lie at 14–34, 37–57, and 58–78; these read ALALLTFAGITLGGSVVACII, PLFVIFSPVLVPATIATTLLA, and SGFTASGSFGATAFTILSWLY. The interval 84-106 is disordered; it reads RDLPKIPGLTPPAPASNPAGSGV.

The protein belongs to the oleosin family. Post-translationally, proteolytically cleaved following anther tapetal breakdown. In terms of tissue distribution, present in pollen (at protein level). Inflorescence-specific expression, especially in flowers florets.

It localises to the secreted. The protein localises to the extracellular space. Its subcellular location is the extracellular matrix. It is found in the pollen coat. The protein resides in the lipid droplet. It localises to the membrane. In terms of biological role, lipid-binding oleosin involved in anther tapetum development, especially for the physiology of tapetosomes. Also implicated in the formation of pollen coat. This is Tapetal oleosin GRP-19 from Arabidopsis thaliana (Mouse-ear cress).